Consider the following 408-residue polypeptide: UDP-N-acetylglucosamine--dolichyl-phosphate N-acetylglucosaminephosphotransferase (408 aa).

Topologically, residues 1–10 (MWAFSELPMP) are lumenal. Residues 11 to 38 (LLINLIVSLLGFVATVTLIPAFRGHFIA) form a helical membrane-spanning segment. Over 39–58 (ARLCGQDLNKTSRQQIPESQ) the chain is Cytoplasmic. UDP-N-acetyl-alpha-D-glucosamine-binding positions include 44-46 (QDL) and E56. L46 contacts tunicamycin A1. The chain crosses the membrane as a helical span at residues 59 to 78 (GVISGAVFLIILFCFIPFPF). Residues 79–91 (LNCFVKEQCKAFP) lie on the Lumenal side of the membrane. The helical transmembrane segment at 92–118 (HHEFVALIGALLAICCMIFLGFADDVL) threads the bilayer. Tunicamycin A1 is bound at residue N119. Over 119–121 (NLR) the chain is Cytoplasmic. The helical transmembrane segment at 122–143 (WRHKLLLPTAASLPLLMVYFTN) threads the bilayer. K125 provides a ligand contact to dolichyl phosphate. Residues 144–166 (FGNTTIVVPKPFRPILGLHLDLG) lie on the Lumenal side of the membrane. A glycan (N-linked (GlcNAc...) asparagine) is linked at N146. A helical membrane pass occupies residues 167–186 (ILYYVYMGLLAVFCTNAINI). Position 178-186 (178-186 (VFCTNAINI)) interacts with dolichyl phosphate. N185 serves as a coordination point for tunicamycin A1. N185 provides a ligand contact to Mg(2+). Residues 187 to 192 (LAGING) lie on the Cytoplasmic side of the membrane. Residue N191 coordinates UDP-N-acetyl-alpha-D-glucosamine. Residues 193-213 (LEAGQSLVISASIIVFNLVEL) form a helical membrane-spanning segment. Residues 214 to 218 (EGDCR) lie on the Lumenal side of the membrane. Residues 219–242 (DDHVFSLYFMIPFFFTTLGLLYHN) traverse the membrane as a helical segment. The Cytoplasmic segment spans residues 243 to 250 (WYPSRVFV). A helical transmembrane segment spans residues 251–269 (GDTFCYFAGMTFAVVGILG). Position 252 (D252) interacts with tunicamycin A1. D252 serves as a coordination point for Mg(2+). Topologically, residues 270–271 (HF) are lumenal. A helical transmembrane segment spans residues 272 to 293 (SKTMLLFFMPQVFNFLYSLPQL). At 294–375 (LHIIPCPRHR…LLLKVLGPIH (82 aa)) the chain is on the cytoplasmic side. A UDP-N-acetyl-alpha-D-glucosamine-binding site is contributed by 301 to 303 (RHR). R303 contributes to the tunicamycin A1 binding site. A helical membrane pass occupies residues 376 to 400 (ERNLTLLLLLLQILGSAITFSIRYQ). The Lumenal portion of the chain corresponds to 401 to 408 (LVRLFYDV).

This sequence belongs to the glycosyltransferase 4 family. As to quaternary structure, homodimer. Requires Mg(2+) as cofactor.

The protein resides in the endoplasmic reticulum membrane. The enzyme catalyses a di-trans,poly-cis-dolichyl phosphate + UDP-N-acetyl-alpha-D-glucosamine = an N-acetyl-alpha-D-glucosaminyl-diphospho-di-trans,poly-cis-dolichol + UMP. The protein operates within protein modification; protein glycosylation. Its activity is regulated as follows. Inhibited by natural nucleoside antibiotic tunicamycin, which acts as a structural analog and competitor of UDP-GlcNAc. Activated by mannosylphosphoryldolichol and phospholipids such as phosphatidylglycerol and phosphatidylcholine. UDP-N-acetylglucosamine--dolichyl-phosphate N-acetylglucosaminephosphotransferase that operates in the biosynthetic pathway of dolichol-linked oligosaccharides, the glycan precursors employed in protein asparagine (N)-glycosylation. The assembly of dolichol-linked oligosaccharides begins on the cytosolic side of the endoplasmic reticulum membrane and finishes in its lumen. The sequential addition of sugars to dolichol pyrophosphate produces dolichol-linked oligosaccharides containing fourteen sugars, including two GlcNAcs, nine mannoses and three glucoses. Once assembled, the oligosaccharide is transferred from the lipid to nascent proteins by oligosaccharyltransferases. Catalyzes the initial step of dolichol-linked oligosaccharide biosynthesis, transfering GlcNAc-1-P from cytosolic UDP-GlcNAc onto the carrier lipid dolichyl phosphate (P-dolichol), yielding GlcNAc-P-P-dolichol embedded in the cytoplasmic leaflet of the endoplasmic reticulum membrane. The chain is UDP-N-acetylglucosamine--dolichyl-phosphate N-acetylglucosaminephosphotransferase from Homo sapiens (Human).